The primary structure comprises 66 residues: Type 3 secretion system chaperone YscE (66 aa).

The protein belongs to the YscE family. Component of the heterodimeric YscE-YscG chaperone. The YscE-YscG chaperone forms a stable ternary complex with YscF/SctF.

The protein localises to the cytoplasm. Chaperone of the type III secretion system (T3SS), also called injectisome, which is used to inject bacterial effector proteins into eukaryotic host cells. Along with YscG, prevents premature polymerization of the YscF/SctF needle protein within the cytoplasm. Required for Yop secretion. This Yersinia enterocolitica protein is Type 3 secretion system chaperone YscE.